Consider the following 457-residue polypeptide: Bifunctional protein GlmU (457 aa).

The pyrophosphorylase stretch occupies residues 1-236 (MDQDACTHSA…DWHFLGVNTP (236 aa)). UDP-N-acetyl-alpha-D-glucosamine contacts are provided by residues 14-17 (LAAG), Lys28, Gln79, and 84-85 (GT). Mg(2+) is bound at residue Asp110. Positions 145, 159, 176, and 234 each coordinate UDP-N-acetyl-alpha-D-glucosamine. Residue Asn234 participates in Mg(2+) binding. The segment at 237-257 (KDLSYVESIQQAFIIEKLLQS) is linker. An N-acetyltransferase region spans residues 258–457 (GVIIHSPESV…GKQKNFSKRK (200 aa)). 2 residues coordinate UDP-N-acetyl-alpha-D-glucosamine: Arg340 and Lys358. His370 (proton acceptor) is an active-site residue. Residues Tyr373 and Asn384 each contribute to the UDP-N-acetyl-alpha-D-glucosamine site. Acetyl-CoA contacts are provided by residues Ala387, 393–394 (NY), Ser412, Ala430, and Arg447.

This sequence in the N-terminal section; belongs to the N-acetylglucosamine-1-phosphate uridyltransferase family. In the C-terminal section; belongs to the transferase hexapeptide repeat family. As to quaternary structure, homotrimer. Requires Mg(2+) as cofactor.

Its subcellular location is the cytoplasm. The catalysed reaction is alpha-D-glucosamine 1-phosphate + acetyl-CoA = N-acetyl-alpha-D-glucosamine 1-phosphate + CoA + H(+). The enzyme catalyses N-acetyl-alpha-D-glucosamine 1-phosphate + UTP + H(+) = UDP-N-acetyl-alpha-D-glucosamine + diphosphate. The protein operates within nucleotide-sugar biosynthesis; UDP-N-acetyl-alpha-D-glucosamine biosynthesis; N-acetyl-alpha-D-glucosamine 1-phosphate from alpha-D-glucosamine 6-phosphate (route II): step 2/2. It participates in nucleotide-sugar biosynthesis; UDP-N-acetyl-alpha-D-glucosamine biosynthesis; UDP-N-acetyl-alpha-D-glucosamine from N-acetyl-alpha-D-glucosamine 1-phosphate: step 1/1. Its pathway is bacterial outer membrane biogenesis; LPS lipid A biosynthesis. Catalyzes the last two sequential reactions in the de novo biosynthetic pathway for UDP-N-acetylglucosamine (UDP-GlcNAc). The C-terminal domain catalyzes the transfer of acetyl group from acetyl coenzyme A to glucosamine-1-phosphate (GlcN-1-P) to produce N-acetylglucosamine-1-phosphate (GlcNAc-1-P), which is converted into UDP-GlcNAc by the transfer of uridine 5-monophosphate (from uridine 5-triphosphate), a reaction catalyzed by the N-terminal domain. The protein is Bifunctional protein GlmU of Lawsonia intracellularis (strain PHE/MN1-00).